A 328-amino-acid chain; its full sequence is Phosphate acyltransferase (328 aa).

The protein belongs to the PlsX family. Homodimer. Probably interacts with PlsY.

The protein resides in the cytoplasm. It catalyses the reaction a fatty acyl-[ACP] + phosphate = an acyl phosphate + holo-[ACP]. It participates in lipid metabolism; phospholipid metabolism. In terms of biological role, catalyzes the reversible formation of acyl-phosphate (acyl-PO(4)) from acyl-[acyl-carrier-protein] (acyl-ACP). This enzyme utilizes acyl-ACP as fatty acyl donor, but not acyl-CoA. In Staphylococcus aureus (strain MSSA476), this protein is Phosphate acyltransferase.